The primary structure comprises 177 residues: Mitochondrial inner membrane protease subunit 2 (177 aa).

A helical transmembrane segment spans residues 19–37 (FFVAVPVAVTFLDRVACVA). Residues S43 and K91 contribute to the active site.

Belongs to the peptidase S26 family. IMP2 subfamily. As to quaternary structure, heterodimer of 2 subunits, IMMPL1 and IMMPL2.

Its subcellular location is the mitochondrion inner membrane. Functionally, catalyzes the removal of transit peptides required for the targeting of proteins from the mitochondrial matrix, across the inner membrane, into the inter-membrane space. Known to process the nuclear encoded protein DIABLO. The protein is Mitochondrial inner membrane protease subunit 2 (IMMP2L) of Bos taurus (Bovine).